We begin with the raw amino-acid sequence, 228 residues long: Ribonuclease H (228 aa).

An RNase H type-1 domain is found at 2–142 (GPMRTIVYAD…ADRLATLGRR (141 aa)). Mg(2+) contacts are provided by Asp11, Glu49, Asp71, and Asp134.

It belongs to the RNase H family. Monomer. It depends on Mg(2+) as a cofactor.

Its subcellular location is the cytoplasm. It catalyses the reaction Endonucleolytic cleavage to 5'-phosphomonoester.. Functionally, endonuclease that specifically degrades the RNA of RNA-DNA hybrids. The chain is Ribonuclease H from Methylorubrum extorquens (strain PA1) (Methylobacterium extorquens).